The primary structure comprises 242 residues: Ubiquitin-conjugating enzyme E2 6 (242 aa).

The Cytoplasmic segment spans residues 1–220 (MASRQSQKRL…HSTPSFGVQR (220 aa)). The UBC core domain occupies 5–156 (QSQKRLTKEY…NQRFTKQFPD (152 aa)). Catalysis depends on C87, which acts as the Glycyl thioester intermediate. The tract at residues 170–190 (AREQAAATTDSTDPEKPFDVR) is disordered. A helical membrane pass occupies residues 221–240 (FTLVGVVVAAFIAAYFNFFS).

This sequence belongs to the ubiquitin-conjugating enzyme family.

The protein localises to the endoplasmic reticulum membrane. It carries out the reaction S-ubiquitinyl-[E1 ubiquitin-activating enzyme]-L-cysteine + [E2 ubiquitin-conjugating enzyme]-L-cysteine = [E1 ubiquitin-activating enzyme]-L-cysteine + S-ubiquitinyl-[E2 ubiquitin-conjugating enzyme]-L-cysteine.. Its pathway is protein modification; protein ubiquitination. Its function is as follows. Catalyzes the covalent attachment of ubiquitin to other proteins. Functions in degradation of misfolded or regulated proteins localized in the endoplasmic reticulum (ER) lumen or membrane via the ubiquitin-proteasome system. Cognate E2 conjugating enzyme for the DOA10 ubiquitin ligase complex, which is part of the ERAD-C pathway responsible for the rapid degradation of membrane proteins with misfolded cytoplasmic domains. The sequence is that of Ubiquitin-conjugating enzyme E2 6 (UBC6) from Debaryomyces hansenii (strain ATCC 36239 / CBS 767 / BCRC 21394 / JCM 1990 / NBRC 0083 / IGC 2968) (Yeast).